The following is a 256-amino-acid chain: Thiazole synthase (256 aa).

Catalysis depends on Lys95, which acts as the Schiff-base intermediate with DXP. Residues Gly156, Ala182–Gly183, and Asn204–Thr205 each bind 1-deoxy-D-xylulose 5-phosphate.

Belongs to the ThiG family. Homotetramer. Forms heterodimers with either ThiH or ThiS.

It localises to the cytoplasm. The catalysed reaction is [ThiS sulfur-carrier protein]-C-terminal-Gly-aminoethanethioate + 2-iminoacetate + 1-deoxy-D-xylulose 5-phosphate = [ThiS sulfur-carrier protein]-C-terminal Gly-Gly + 2-[(2R,5Z)-2-carboxy-4-methylthiazol-5(2H)-ylidene]ethyl phosphate + 2 H2O + H(+). It participates in cofactor biosynthesis; thiamine diphosphate biosynthesis. In terms of biological role, catalyzes the rearrangement of 1-deoxy-D-xylulose 5-phosphate (DXP) to produce the thiazole phosphate moiety of thiamine. Sulfur is provided by the thiocarboxylate moiety of the carrier protein ThiS. In vitro, sulfur can be provided by H(2)S. This is Thiazole synthase from Klebsiella pneumoniae (strain 342).